The following is a 217-amino-acid chain: Probable GTP-binding protein EngB (217 aa).

The region spanning 37 to 214 is the EngB-type G domain; the sequence is DGVEIAFAGR…RAAMAKLLEE (178 aa). GTP is bound by residues 45–52, 72–76, 92–95, 159–162, and 193–195; these read GRSNVGKS, GRTQE, DMPG, TKAD, and TSS. The Mg(2+) site is built by S52 and T74.

It belongs to the TRAFAC class TrmE-Era-EngA-EngB-Septin-like GTPase superfamily. EngB GTPase family. The cofactor is Mg(2+).

Its function is as follows. Necessary for normal cell division and for the maintenance of normal septation. The sequence is that of Probable GTP-binding protein EngB from Bradyrhizobium diazoefficiens (strain JCM 10833 / BCRC 13528 / IAM 13628 / NBRC 14792 / USDA 110).